Consider the following 487-residue polypeptide: N-succinylglutamate 5-semialdehyde dehydrogenase (487 aa).

221–226 (GSSDTG) serves as a coordination point for NAD(+). Catalysis depends on residues glutamate 244 and cysteine 278.

This sequence belongs to the aldehyde dehydrogenase family. AstD subfamily.

The enzyme catalyses N-succinyl-L-glutamate 5-semialdehyde + NAD(+) + H2O = N-succinyl-L-glutamate + NADH + 2 H(+). Its pathway is amino-acid degradation; L-arginine degradation via AST pathway; L-glutamate and succinate from L-arginine: step 4/5. Functionally, catalyzes the NAD-dependent reduction of succinylglutamate semialdehyde into succinylglutamate. This chain is N-succinylglutamate 5-semialdehyde dehydrogenase, found in Burkholderia multivorans (strain ATCC 17616 / 249).